A 310-amino-acid chain; its full sequence is Methionyl-tRNA formyltransferase (310 aa).

Residue 109–112 coordinates (6S)-5,6,7,8-tetrahydrofolate; the sequence is SLLP. A disordered region spans residues 283–310; that stretch reads QPQGKKAMPAADWARGARIGDGERFGDD. Over residues 300–310 the composition is skewed to basic and acidic residues; the sequence is RIGDGERFGDD.

The protein belongs to the Fmt family.

It carries out the reaction L-methionyl-tRNA(fMet) + (6R)-10-formyltetrahydrofolate = N-formyl-L-methionyl-tRNA(fMet) + (6S)-5,6,7,8-tetrahydrofolate + H(+). Attaches a formyl group to the free amino group of methionyl-tRNA(fMet). The formyl group appears to play a dual role in the initiator identity of N-formylmethionyl-tRNA by promoting its recognition by IF2 and preventing the misappropriation of this tRNA by the elongation apparatus. This chain is Methionyl-tRNA formyltransferase, found in Thermobifida fusca (strain YX).